The sequence spans 227 residues: Ribose-5-phosphate isomerase A (227 aa).

Substrate contacts are provided by residues 28-31 (TGST), 81-84 (DGAD), and 94-97 (KGGG). Glu103 functions as the Proton acceptor in the catalytic mechanism. Residue Lys121 participates in substrate binding.

It belongs to the ribose 5-phosphate isomerase family. Homodimer.

It carries out the reaction aldehydo-D-ribose 5-phosphate = D-ribulose 5-phosphate. The protein operates within carbohydrate degradation; pentose phosphate pathway; D-ribose 5-phosphate from D-ribulose 5-phosphate (non-oxidative stage): step 1/1. Its function is as follows. Catalyzes the reversible conversion of ribose-5-phosphate to ribulose 5-phosphate. This is Ribose-5-phosphate isomerase A from Caulobacter vibrioides (strain ATCC 19089 / CIP 103742 / CB 15) (Caulobacter crescentus).